The following is a 111-amino-acid chain: uncharacterized protein (111 aa).

This is an uncharacterized protein from Paracoccus denitrificans.